A 626-amino-acid polypeptide reads, in one-letter code: ATP-dependent rRNA helicase spb4 (626 aa).

The Q motif signature appears at 14 to 42; the sequence is WDALTPSLAEWVLDAISSMGFEKMTPVQA. Positions 45–246 constitute a Helicase ATP-binding domain; that stretch reads IPLFMGNKDV…RVGLRNPVKI (202 aa). 58-65 serves as a coordination point for ATP; sequence AVTGSGKT. Positions 194 to 197 match the DEAD box motif; it reads DEAD. The region spanning 279-437 is the Helicase C-terminal domain; it reads ALLSLLSQLE…TTGEAAKILI (159 aa). The tract at residues 553–599 is disordered; that stretch reads QREAWSQKHEKQDLKELKREKKKRKREIERLEKMTDEEKKEEQAKEK. Basic and acidic residues-rich tracts occupy residues 554-571 and 578-599; these read REAWSQKHEKQDLKELKR and REIERLEKMTDEEKKEEQAKEK. The stretch at 558–620 forms a coiled coil; that stretch reads SQKHEKQDLK…RKIEDDADVE (63 aa).

It belongs to the DEAD box helicase family. DDX55/SPB4 subfamily. Component of pre-60S ribosomal complexes.

The protein localises to the nucleus. The protein resides in the nucleolus. The catalysed reaction is ATP + H2O = ADP + phosphate + H(+). Functionally, ATP-binding RNA helicase involved in the biogenesis of 60S ribosomal subunits. Binds 90S pre-ribosomal particles and dissociates from pre-60S ribosomal particles after processing of 27SB pre-rRNA. Required for the normal formation of 18S rRNA through the processing of pre-rRNAs at sites A0, A1 and A2, and the normal formation of 25S and 5.8S rRNAs through the processing of pre-rRNAs at sites C1 and C2. This is ATP-dependent rRNA helicase spb4 from Botryotinia fuckeliana (strain B05.10) (Noble rot fungus).